The primary structure comprises 375 residues: Ribonuclease D (375 aa).

A 3'-5' exonuclease domain is found at 3-169; sequence YQMITTDDAL…LPITAKLMVE (167 aa). The HRDC domain occupies 210–289; that stretch reads RTRQLACLQL…EKAQTLPEDA (80 aa).

Belongs to the RNase D family. It depends on a divalent metal cation as a cofactor.

It is found in the cytoplasm. The enzyme catalyses Exonucleolytic cleavage that removes extra residues from the 3'-terminus of tRNA to produce 5'-mononucleotides.. Exonuclease involved in the 3' processing of various precursor tRNAs. Initiates hydrolysis at the 3'-terminus of an RNA molecule and releases 5'-mononucleotides. In Escherichia coli (strain K12), this protein is Ribonuclease D.